A 102-amino-acid chain; its full sequence is Small ribosomal subunit protein uS10 (102 aa).

This sequence belongs to the universal ribosomal protein uS10 family. In terms of assembly, part of the 30S ribosomal subunit.

Involved in the binding of tRNA to the ribosomes. This Nitrosopumilus maritimus (strain SCM1) protein is Small ribosomal subunit protein uS10.